The sequence spans 174 residues: Tat proofreading chaperone TtrD (174 aa).

Belongs to the TorD/DmsD family. Monomer.

It localises to the cytoplasm. In terms of biological role, binds specifically to the Tat signal peptide of the TtrA subunit of the tetrathionate reductase. The protein is Tat proofreading chaperone TtrD (ttrD) of Archaeoglobus fulgidus (strain ATCC 49558 / DSM 4304 / JCM 9628 / NBRC 100126 / VC-16).